Here is a 534-residue protein sequence, read N- to C-terminus: Arginine--tRNA ligase (534 aa).

Positions 120 to 130 (ANPTGFLHLGH) match the 'HIGH' region motif.

This sequence belongs to the class-I aminoacyl-tRNA synthetase family. As to quaternary structure, monomer.

The protein resides in the cytoplasm. The catalysed reaction is tRNA(Arg) + L-arginine + ATP = L-arginyl-tRNA(Arg) + AMP + diphosphate. The sequence is that of Arginine--tRNA ligase from Mesomycoplasma hyopneumoniae (strain J / ATCC 25934 / NCTC 10110) (Mycoplasma hyopneumoniae).